Here is a 367-residue protein sequence, read N- to C-terminus: Small ribosomal subunit protein uS2 (367 aa).

The segment at 1-68 is disordered; it reads MPKKAEAKTG…NSTPSTGSKF (68 aa). Basic and acidic residues predominate over residues 21 to 40; the sequence is AKKDVKAEVNETNKTAEKVS. The segment covering 53-66 has biased composition (low complexity); sequence TNESSSNSTPSTGS.

This sequence belongs to the universal ribosomal protein uS2 family.

In Malacoplasma penetrans (strain HF-2) (Mycoplasma penetrans), this protein is Small ribosomal subunit protein uS2.